Reading from the N-terminus, the 208-residue chain is ATP phosphoribosyltransferase (208 aa).

This sequence belongs to the ATP phosphoribosyltransferase family. Short subfamily. In terms of assembly, heteromultimer composed of HisG and HisZ subunits.

It localises to the cytoplasm. It carries out the reaction 1-(5-phospho-beta-D-ribosyl)-ATP + diphosphate = 5-phospho-alpha-D-ribose 1-diphosphate + ATP. The protein operates within amino-acid biosynthesis; L-histidine biosynthesis; L-histidine from 5-phospho-alpha-D-ribose 1-diphosphate: step 1/9. Catalyzes the condensation of ATP and 5-phosphoribose 1-diphosphate to form N'-(5'-phosphoribosyl)-ATP (PR-ATP). Has a crucial role in the pathway because the rate of histidine biosynthesis seems to be controlled primarily by regulation of HisG enzymatic activity. This Oceanobacillus iheyensis (strain DSM 14371 / CIP 107618 / JCM 11309 / KCTC 3954 / HTE831) protein is ATP phosphoribosyltransferase.